Reading from the N-terminus, the 165-residue chain is MRILGIDPGLRTLGWGVIEQRGSRLSHVANGLCHSDGDDLGERLLSLHNQIVEVIEEYRPDQAAIEQTFVNKDGAGTLKLGQARGVALLTLAQAGLPVGEYAPNRVKKTVVGVGHAEKEQVIHMVKLQLPGCLPKGADAADALAIAICHAYYGSAQALSQREVRA.

Active-site residues include aspartate 7, glutamate 66, and aspartate 138. Aspartate 7, glutamate 66, and aspartate 138 together coordinate Mg(2+).

Belongs to the RuvC family. In terms of assembly, homodimer which binds Holliday junction (HJ) DNA. The HJ becomes 2-fold symmetrical on binding to RuvC with unstacked arms; it has a different conformation from HJ DNA in complex with RuvA. In the full resolvosome a probable DNA-RuvA(4)-RuvB(12)-RuvC(2) complex forms which resolves the HJ. Mg(2+) serves as cofactor.

The protein localises to the cytoplasm. The enzyme catalyses Endonucleolytic cleavage at a junction such as a reciprocal single-stranded crossover between two homologous DNA duplexes (Holliday junction).. In terms of biological role, the RuvA-RuvB-RuvC complex processes Holliday junction (HJ) DNA during genetic recombination and DNA repair. Endonuclease that resolves HJ intermediates. Cleaves cruciform DNA by making single-stranded nicks across the HJ at symmetrical positions within the homologous arms, yielding a 5'-phosphate and a 3'-hydroxyl group; requires a central core of homology in the junction. The consensus cleavage sequence is 5'-(A/T)TT(C/G)-3'. Cleavage occurs on the 3'-side of the TT dinucleotide at the point of strand exchange. HJ branch migration catalyzed by RuvA-RuvB allows RuvC to scan DNA until it finds its consensus sequence, where it cleaves and resolves the cruciform DNA. The chain is Crossover junction endodeoxyribonuclease RuvC from Ruegeria pomeroyi (strain ATCC 700808 / DSM 15171 / DSS-3) (Silicibacter pomeroyi).